Reading from the N-terminus, the 372-residue chain is Erythronate-4-phosphate dehydrogenase (372 aa).

Ser45 and Thr66 together coordinate substrate. Asp146 contributes to the NAD(+) binding site. The active site involves Arg209. Asp233 is a binding site for NAD(+). Glu238 is a catalytic residue. The active-site Proton donor is His255. Position 258 (Gly258) interacts with NAD(+). A substrate-binding site is contributed by Tyr259.

Belongs to the D-isomer specific 2-hydroxyacid dehydrogenase family. PdxB subfamily. In terms of assembly, homodimer.

The protein resides in the cytoplasm. The catalysed reaction is 4-phospho-D-erythronate + NAD(+) = (R)-3-hydroxy-2-oxo-4-phosphooxybutanoate + NADH + H(+). The protein operates within cofactor biosynthesis; pyridoxine 5'-phosphate biosynthesis; pyridoxine 5'-phosphate from D-erythrose 4-phosphate: step 2/5. Catalyzes the oxidation of erythronate-4-phosphate to 3-hydroxy-2-oxo-4-phosphonooxybutanoate. This is Erythronate-4-phosphate dehydrogenase from Blochmanniella floridana.